Here is a 1504-residue protein sequence, read N- to C-terminus: DNA-directed RNA polymerase subunit beta' (1504 aa).

Positions 60, 62, 75, and 78 each coordinate Zn(2+). The interval 265–294 (RKQRDLEDAEQLTGAERERKEYEASQERER) is disordered. Positions 279–294 (AERERKEYEASQERER) are enriched in basic and acidic residues. The Mg(2+) site is built by D626, D628, and D630. Residues C1002, C1075, C1082, and C1085 each coordinate Zn(2+). A disordered region spans residues 1468–1504 (RALIGGDGDDGERNNGDFDDQVGEDVVIPPDDDDQEA).

Belongs to the RNA polymerase beta' chain family. In terms of assembly, the RNAP catalytic core consists of 2 alpha, 1 beta, 1 beta' and 1 omega subunit. When a sigma factor is associated with the core the holoenzyme is formed, which can initiate transcription. It depends on Mg(2+) as a cofactor. Zn(2+) is required as a cofactor.

The enzyme catalyses RNA(n) + a ribonucleoside 5'-triphosphate = RNA(n+1) + diphosphate. DNA-dependent RNA polymerase catalyzes the transcription of DNA into RNA using the four ribonucleoside triphosphates as substrates. The polypeptide is DNA-directed RNA polymerase subunit beta' (Roseiflexus sp. (strain RS-1)).